Here is a 162-residue protein sequence, read N- to C-terminus: Small ribosomal subunit protein uS13 (162 aa).

The tract at residues 142–162 is disordered; it reads RGQRTKSTGRRGSTVGVSRKK.

The protein belongs to the universal ribosomal protein uS13 family. Part of the 30S ribosomal subunit. Forms a loose heterodimer with protein S19. Forms two bridges to the 50S subunit in the 70S ribosome.

Its function is as follows. Located at the top of the head of the 30S subunit, it contacts several helices of the 16S rRNA. In the 70S ribosome it contacts the 23S rRNA (bridge B1a) and protein L5 of the 50S subunit (bridge B1b), connecting the 2 subunits; these bridges are implicated in subunit movement. The sequence is that of Small ribosomal subunit protein uS13 from Methanosarcina acetivorans (strain ATCC 35395 / DSM 2834 / JCM 12185 / C2A).